We begin with the raw amino-acid sequence, 461 residues long: 3-oxoacyl-[acyl-carrier-protein] synthase, mitochondrial (461 aa).

The N-terminal 28 residues, 1-28, are a transit peptide targeting the mitochondrion; the sequence is MATSNLRRHLSASRLRLNRFISTSSSYH. Residues 30 to 460 enclose the Ketosynthase family 3 (KS3) domain; it reads HRRVVVTGLG…GTNASLLFAS (431 aa). Catalysis depends on for beta-ketoacyl synthase activity residues cysteine 209, histidine 350, and histidine 389.

It belongs to the thiolase-like superfamily. Beta-ketoacyl-ACP synthases family. Homodimer. As to expression, expressed at the same level in leaves, roots, siliques and flowers.

It localises to the mitochondrion. It carries out the reaction a fatty acyl-[ACP] + malonyl-[ACP] + H(+) = a 3-oxoacyl-[ACP] + holo-[ACP] + CO2. The enzyme catalyses butanoyl-[ACP] + malonyl-[ACP] + H(+) = 3-oxohexanoyl-[ACP] + holo-[ACP] + CO2. The catalysed reaction is hexanoyl-[ACP] + malonyl-[ACP] + H(+) = 3-oxooctanoyl-[ACP] + holo-[ACP] + CO2. It catalyses the reaction octanoyl-[ACP] + malonyl-[ACP] + H(+) = 3-oxodecanoyl-[ACP] + holo-[ACP] + CO2. It carries out the reaction decanoyl-[ACP] + malonyl-[ACP] + H(+) = 3-oxododecanoyl-[ACP] + holo-[ACP] + CO2. The enzyme catalyses dodecanoyl-[ACP] + malonyl-[ACP] + H(+) = 3-oxotetradecanoyl-[ACP] + holo-[ACP] + CO2. The catalysed reaction is tetradecanoyl-[ACP] + malonyl-[ACP] + H(+) = 3-oxohexadecanoyl-[ACP] + holo-[ACP] + CO2. It catalyses the reaction hexadecanoyl-[ACP] + malonyl-[ACP] + H(+) = 3-oxooctadecanoyl-[ACP] + holo-[ACP] + CO2. It functions in the pathway lipid metabolism; fatty acid biosynthesis. With respect to regulation, inhibited by cerulenin. Functionally, catalyzes all the condensation reaction of fatty acid synthesis by the addition to an acyl acceptor of two carbons from malonyl-ACP. Able to elongate saturated acyl chains from 4 to at least 16 carbons. Uses malonyl-CoA but not acetyl-CoA as primer substrate. When expressed in a heterologous system, reveals a bimodal distribution of products, with peaks at C8 and C14-C16. The major product of the reaction (octanoyl-ACP) is required for the lipoylation of essential mitochondrial proteins. Required for mitochondrial fatty acid synthesis (mtFAS). MtFAS are essential for photorespiration and plant development, probably by influencing mitochondrial membrane lipid composition and other lipid metabolic pathways. This Arabidopsis thaliana (Mouse-ear cress) protein is 3-oxoacyl-[acyl-carrier-protein] synthase, mitochondrial.